A 205-amino-acid chain; its full sequence is Ribonuclease HII (205 aa).

Residues 14–201 (EIVAGVDEAG…KGNINHSAIL (188 aa)) form the RNase H type-2 domain. A divalent metal cation contacts are provided by Asp-20, Glu-21, and Asp-111.

Belongs to the RNase HII family. Requires Mn(2+) as cofactor. Mg(2+) is required as a cofactor.

Its subcellular location is the cytoplasm. It catalyses the reaction Endonucleolytic cleavage to 5'-phosphomonoester.. Functionally, endonuclease that specifically degrades the RNA of RNA-DNA hybrids. The polypeptide is Ribonuclease HII (Orientia tsutsugamushi (strain Boryong) (Rickettsia tsutsugamushi)).